A 1322-amino-acid polypeptide reads, in one-letter code: Putative DNA ligase 4 (1322 aa).

11 residues coordinate ATP: Glu-265, Lys-267, Arg-272, Arg-287, Glu-317, Phe-387, Glu-497, Lys-502, Arg-513, Lys-519, and Lys-521. The N6-AMP-lysine intermediate role is filled by Lys-267. Glu-317 contributes to the Mg(2+) binding site. Residue Glu-497 participates in Mg(2+) binding. BRCT domains follow at residues 686 to 768 (LDVQ…PKFD) and 825 to 935 (ERFC…TYSL). Disordered regions lie at residues 945–1212 (IERS…SATC) and 1245–1310 (AEAK…KKVS). Residues 957–969 (DKLEENEKADTSH) are compositionally biased toward basic and acidic residues. Basic residues-rich tracts occupy residues 970-979 (VKHAPRKRGR) and 994-1005 (PVRRTRARRGNQ). Composition is skewed to basic and acidic residues over residues 1007–1022 (AKID…HGET) and 1033–1047 (NISK…KDQV). The segment covering 1051 to 1063 (PVRRTRARRGKQH) has biased composition (basic residues). Basic and acidic residues-rich tracts occupy residues 1082 to 1104 (DDQR…RDQG), 1125 to 1161 (AKID…KDQE), and 1190 to 1204 (PKHE…RDTA). Over residues 1261–1288 (SSYVAPVPQASASSASSSGVPAPHAGSS) the composition is skewed to low complexity.

Belongs to the ATP-dependent DNA ligase family. Requires Mg(2+) as cofactor.

The protein resides in the nucleus. The enzyme catalyses ATP + (deoxyribonucleotide)n-3'-hydroxyl + 5'-phospho-(deoxyribonucleotide)m = (deoxyribonucleotide)n+m + AMP + diphosphate.. In terms of biological role, DNA ligase involved in DNA non-homologous end joining (NHEJ); required for double-strand break (DSB) repair. This is Putative DNA ligase 4 (LIG4) from Oryza sativa subsp. japonica (Rice).